Reading from the N-terminus, the 360-residue chain is Phospho-N-acetylmuramoyl-pentapeptide-transferase (360 aa).

10 helical membrane-spanning segments follow: residues 26–46, 73–93, 97–117, 135–155, 168–188, 199–219, 236–256, 263–283, 288–308, and 338–358; these read AILGLLTALVFSLWWGPILIK, TMGGILILAGIFISVLLWGDL, YVLVTLFVLASFGVIGFIDDY, ALQSIAALVVAVYLYSSSTMV, IMPQLGFMFILLAYFTIVGAS, GLAIMPTVMVAAAFALIAYLS, AGELVIVCTAMVGAGLGFLWF, VFMGDVGSLALGAALGVIAIL, ILLVIMGGVFVMETVSVILQV, and VIVRFWIISLFLVLLGLATLK.

Belongs to the glycosyltransferase 4 family. MraY subfamily. Mg(2+) serves as cofactor.

The protein localises to the cell inner membrane. The catalysed reaction is UDP-N-acetyl-alpha-D-muramoyl-L-alanyl-gamma-D-glutamyl-meso-2,6-diaminopimeloyl-D-alanyl-D-alanine + di-trans,octa-cis-undecaprenyl phosphate = di-trans,octa-cis-undecaprenyl diphospho-N-acetyl-alpha-D-muramoyl-L-alanyl-D-glutamyl-meso-2,6-diaminopimeloyl-D-alanyl-D-alanine + UMP. It participates in cell wall biogenesis; peptidoglycan biosynthesis. In terms of biological role, catalyzes the initial step of the lipid cycle reactions in the biosynthesis of the cell wall peptidoglycan: transfers peptidoglycan precursor phospho-MurNAc-pentapeptide from UDP-MurNAc-pentapeptide onto the lipid carrier undecaprenyl phosphate, yielding undecaprenyl-pyrophosphoryl-MurNAc-pentapeptide, known as lipid I. The protein is Phospho-N-acetylmuramoyl-pentapeptide-transferase of Shewanella frigidimarina (strain NCIMB 400).